We begin with the raw amino-acid sequence, 355 residues long: Uroporphyrinogen decarboxylase (355 aa).

Substrate is bound by residues 23–27 (RQAGR), D72, Y148, S203, and H321.

Belongs to the uroporphyrinogen decarboxylase family. In terms of assembly, homodimer.

Its subcellular location is the cytoplasm. It catalyses the reaction uroporphyrinogen III + 4 H(+) = coproporphyrinogen III + 4 CO2. Its pathway is porphyrin-containing compound metabolism; protoporphyrin-IX biosynthesis; coproporphyrinogen-III from 5-aminolevulinate: step 4/4. Functionally, catalyzes the decarboxylation of four acetate groups of uroporphyrinogen-III to yield coproporphyrinogen-III. This Chloroflexus aurantiacus (strain ATCC 29366 / DSM 635 / J-10-fl) protein is Uroporphyrinogen decarboxylase.